The sequence spans 137 residues: Large ribosomal subunit protein uL16 (137 aa).

It belongs to the universal ribosomal protein uL16 family. Part of the 50S ribosomal subunit.

Functionally, binds 23S rRNA and is also seen to make contacts with the A and possibly P site tRNAs. This chain is Large ribosomal subunit protein uL16, found in Ectopseudomonas mendocina (strain ymp) (Pseudomonas mendocina).